A 307-amino-acid polypeptide reads, in one-letter code: Transmembrane and coiled-coil domain-containing protein 5B (307 aa).

A coiled-coil region spans residues 20–212; sequence TLEAIKQNLK…SKAQNDSSQV (193 aa). A helical membrane pass occupies residues 246–268; that stretch reads YLFFMVMIVIRLLGYVFFHLQYV.

Belongs to the TMCO5 family.

The protein resides in the membrane. The chain is Transmembrane and coiled-coil domain-containing protein 5B (Tmco5b) from Mus musculus (Mouse).